A 203-amino-acid chain; its full sequence is Glycerol-3-phosphate acyltransferase (203 aa).

The next 4 membrane-spanning stretches (helical) occupy residues 6-26 (LTLL…AVLV), 82-102 (AISL…PIFF), 118-138 (APIG…LVLI), and 141-161 (YSSL…WWLD).

It belongs to the PlsY family. Probably interacts with PlsX.

The protein localises to the cell inner membrane. It catalyses the reaction an acyl phosphate + sn-glycerol 3-phosphate = a 1-acyl-sn-glycero-3-phosphate + phosphate. Its pathway is lipid metabolism; phospholipid metabolism. Catalyzes the transfer of an acyl group from acyl-phosphate (acyl-PO(4)) to glycerol-3-phosphate (G3P) to form lysophosphatidic acid (LPA). This enzyme utilizes acyl-phosphate as fatty acyl donor, but not acyl-CoA or acyl-ACP. This is Glycerol-3-phosphate acyltransferase from Shewanella sp. (strain MR-4).